A 148-amino-acid polypeptide reads, in one-letter code: 1,4-dihydroxy-2-naphthoyl-CoA hydrolase (148 aa).

The active site involves aspartate 15.

Belongs to the 4-hydroxybenzoyl-CoA thioesterase family. DHNA-CoA hydrolase subfamily.

It catalyses the reaction 1,4-dihydroxy-2-naphthoyl-CoA + H2O = 1,4-dihydroxy-2-naphthoate + CoA + H(+). It functions in the pathway cofactor biosynthesis; phylloquinone biosynthesis. It participates in quinol/quinone metabolism; 1,4-dihydroxy-2-naphthoate biosynthesis; 1,4-dihydroxy-2-naphthoate from chorismate: step 7/7. Its function is as follows. Catalyzes the hydrolysis of 1,4-dihydroxy-2-naphthoyl-CoA (DHNA-CoA) to 1,4-dihydroxy-2-naphthoate (DHNA), a reaction involved in phylloquinone (vitamin K1) biosynthesis. This Nostoc punctiforme (strain ATCC 29133 / PCC 73102) protein is 1,4-dihydroxy-2-naphthoyl-CoA hydrolase.